The primary structure comprises 1244 residues: ATP-dependent helicase/nuclease subunit A (1244 aa).

The UvrD-like helicase ATP-binding domain maps to Lys-4–Arg-475. ATP is bound at residue Ala-25–Thr-32. One can recognise a UvrD-like helicase C-terminal domain in the interval Glu-515–Gly-816. The segment at Glu-538–Ser-559 is disordered.

Belongs to the helicase family. AddA subfamily. Heterodimer of AddA and AddB/RexB. Mg(2+) is required as a cofactor.

It carries out the reaction Couples ATP hydrolysis with the unwinding of duplex DNA by translocating in the 3'-5' direction.. The catalysed reaction is ATP + H2O = ADP + phosphate + H(+). The heterodimer acts as both an ATP-dependent DNA helicase and an ATP-dependent, dual-direction single-stranded exonuclease. Recognizes the chi site generating a DNA molecule suitable for the initiation of homologous recombination. The AddA nuclease domain is required for chi fragment generation; this subunit has the helicase and 3' -&gt; 5' nuclease activities. The chain is ATP-dependent helicase/nuclease subunit A from Desulforamulus reducens (strain ATCC BAA-1160 / DSM 100696 / MI-1) (Desulfotomaculum reducens).